A 186-amino-acid polypeptide reads, in one-letter code: uncharacterized protein (186 aa).

The disordered stretch occupies residues 156–186 (DTKELERTTQPPEHQKHHQEPREKRGMNKRD). Basic and acidic residues predominate over residues 173-186 (HQEPREKRGMNKRD).

This is an uncharacterized protein from Bacillus subtilis (strain 168).